Here is a 307-residue protein sequence, read N- to C-terminus: MVRHPEYQYLDLMAHLLENGDRRIDRTGVGTLSGLGAMMRFDLSKGQLPVFTTKRVYWKLAVKEMLWFLTGDTNIRNLLKQNVRIWTDWPLAAYRKATGEAISQEDFEARILADEAFAETWGDLGPVYGKQWRQWRDADGQVHDQIATVIDQLRHNPSSRRMIFHAWNVGELAGMALPPCHMVYQFHVSNLPSPGETKRPRLSLMVYQRSCDLFLGNPFNICQQAVLLAMVAQQVDMDVGELVWAGGDVHIYLNHLDAIREQLSREPRPFPTLRLLRRPDSIDDYRIEDFEVSDYEPHAAIAAEVAV.

DUMP is bound by residues R26 and 160-161 (RR). C180 (nucleophile) is an active-site residue. DUMP is bound by residues 209-212 (RSCD), N220, and 250-252 (HIY). Residue D212 participates in (6R)-5,10-methylene-5,6,7,8-tetrahydrofolate binding. A (6R)-5,10-methylene-5,6,7,8-tetrahydrofolate-binding site is contributed by A306.

It belongs to the thymidylate synthase family. Bacterial-type ThyA subfamily. Homodimer.

Its subcellular location is the cytoplasm. It carries out the reaction dUMP + (6R)-5,10-methylene-5,6,7,8-tetrahydrofolate = 7,8-dihydrofolate + dTMP. It participates in pyrimidine metabolism; dTTP biosynthesis. Its function is as follows. Catalyzes the reductive methylation of 2'-deoxyuridine-5'-monophosphate (dUMP) to 2'-deoxythymidine-5'-monophosphate (dTMP) while utilizing 5,10-methylenetetrahydrofolate (mTHF) as the methyl donor and reductant in the reaction, yielding dihydrofolate (DHF) as a by-product. This enzymatic reaction provides an intracellular de novo source of dTMP, an essential precursor for DNA biosynthesis. This is Thymidylate synthase from Rhizobium rhizogenes (strain K84 / ATCC BAA-868) (Agrobacterium radiobacter).